Here is a 356-residue protein sequence, read N- to C-terminus: MEYQRYKTRQIKVGDVLIGGDAPISVQSMLFTKTRDVEGCLEQLNRLYFAGANIVRLACLDMADARALKEIKAKSPLPLIVDIHFNHKLAVFCAEFIDGVRINPGNIGSKENIKEVVQACKQRKIPIRIGVNHGSIEKQFSDKYGYNIEAMLGSALYNIKLLEDLDFFDIKISMKTSDVQNTIKAYEALRPLCDYPFHLGVTEAGTKFHSTVKSSIALGNLLLKGIGDTMRVSMTGELEEEIRVARAILQDSGVQKSGVNIISCPTCGRIQSDLIKAIKIVEEKTKHIKEPLNISVMGCVVNALGEAKGADVAIAFGKNQGLVIRHGEVVAKLKEDELVDRFLLEVEDEVKLREKD.

4 residues coordinate [4Fe-4S] cluster: C264, C267, C299, and E306.

It belongs to the IspG family. The cofactor is [4Fe-4S] cluster.

The enzyme catalyses (2E)-4-hydroxy-3-methylbut-2-enyl diphosphate + oxidized [flavodoxin] + H2O + 2 H(+) = 2-C-methyl-D-erythritol 2,4-cyclic diphosphate + reduced [flavodoxin]. It participates in isoprenoid biosynthesis; isopentenyl diphosphate biosynthesis via DXP pathway; isopentenyl diphosphate from 1-deoxy-D-xylulose 5-phosphate: step 5/6. Functionally, converts 2C-methyl-D-erythritol 2,4-cyclodiphosphate (ME-2,4cPP) into 1-hydroxy-2-methyl-2-(E)-butenyl 4-diphosphate. In Campylobacter lari (strain RM2100 / D67 / ATCC BAA-1060), this protein is 4-hydroxy-3-methylbut-2-en-1-yl diphosphate synthase (flavodoxin).